Here is a 378-residue protein sequence, read N- to C-terminus: Beta-1,3-galactosyltransferase pvg3 (378 aa).

Topologically, residues methionine 1 to lysine 8 are cytoplasmic. A helical; Signal-anchor for type II membrane protein transmembrane segment spans residues isoleucine 9–asparagine 29. Residues arginine 30–valine 378 are Lumenal-facing. 4 N-linked (GlcNAc...) asparagine glycosylation sites follow: asparagine 53, asparagine 97, asparagine 180, and asparagine 354.

It belongs to the glycosyltransferase 31 family.

Its subcellular location is the endoplasmic reticulum membrane. It localises to the golgi apparatus. It is found in the golgi stack membrane. The catalysed reaction is 3-O-(beta-D-galactosyl-(1-&gt;4)-beta-D-xylosyl)-L-seryl-[protein] + UDP-alpha-D-galactose = 3-O-(beta-D-galactosyl-(1-&gt;3)-beta-D-galactosyl-(1-&gt;4)-beta-D-xylosyl)-L-seryl-[protein] + UDP + H(+). Functionally, involved in cell wall biogenesis. Has a role in the addition of Gal-beta1,3 moeities to galactomannans and their subsequent pyruvylation. Has a role in meiosis. This Schizosaccharomyces pombe (strain 972 / ATCC 24843) (Fission yeast) protein is Beta-1,3-galactosyltransferase pvg3 (pvg3).